Reading from the N-terminus, the 495-residue chain is UDP-glycosyltransferase 73C12 (495 aa).

Residue histidine 24 is the Proton acceptor of the active site. Histidine 24 provides a ligand contact to an anthocyanidin. Aspartate 129 (charge relay) is an active-site residue. Residues alanine 356, glutamine 358, histidine 373, tryptophan 376, asparagine 377, serine 378, and glutamate 381 each contribute to the UDP-alpha-D-glucose site. Alanine 396 contributes to the an anthocyanidin binding site. UDP-alpha-D-glucose is bound by residues aspartate 397 and glutamine 398.

The protein belongs to the UDP-glycosyltransferase family.

The enzyme catalyses oleanolate + UDP-alpha-D-glucose = oleanolate 3-O-beta-D-glucoside + UDP + H(+). Functionally, catalyzes the transfer of a glucose (Glc) moiety from UDP-Glc to the C-3 position of the oleanane sapogenins oleanolate and hederagenin, and to the C-28 carboxylic group of the lupane sapogenin betulinate. The monoglucosylated hederagenin 3-O-beta-D-glucoside is a feeding deterrent of the yellow-striped flea beetle (Phyllotreta nemorum). This is UDP-glycosyltransferase 73C12 from Barbarea vulgaris (Yellow rocket).